We begin with the raw amino-acid sequence, 411 residues long: Serine--tRNA ligase (411 aa).

226-228 (TSE) contacts L-serine. Residue 257–259 (RKE) participates in ATP binding. An L-serine-binding site is contributed by Glu-280. 344 to 347 (EISS) provides a ligand contact to ATP. L-serine is bound at residue Ser-379.

It belongs to the class-II aminoacyl-tRNA synthetase family. Type-1 seryl-tRNA synthetase subfamily. As to quaternary structure, homodimer. The tRNA molecule binds across the dimer.

The protein localises to the cytoplasm. The catalysed reaction is tRNA(Ser) + L-serine + ATP = L-seryl-tRNA(Ser) + AMP + diphosphate + H(+). It carries out the reaction tRNA(Sec) + L-serine + ATP = L-seryl-tRNA(Sec) + AMP + diphosphate + H(+). Its pathway is aminoacyl-tRNA biosynthesis; selenocysteinyl-tRNA(Sec) biosynthesis; L-seryl-tRNA(Sec) from L-serine and tRNA(Sec): step 1/1. Functionally, catalyzes the attachment of serine to tRNA(Ser). Is also able to aminoacylate tRNA(Sec) with serine, to form the misacylated tRNA L-seryl-tRNA(Sec), which will be further converted into selenocysteinyl-tRNA(Sec). This is Serine--tRNA ligase from Campylobacter jejuni subsp. doylei (strain ATCC BAA-1458 / RM4099 / 269.97).